Reading from the N-terminus, the 201-residue chain is Ribonuclease MRP protein subunit RMP1 (201 aa).

The chain crosses the membrane as a helical span at residues 86-108 (YWQFNGVIALGQFVTLGCTLVTL).

As to quaternary structure, component of RNase MRP complex which consists of an RNA moiety and at least 10 protein subunits including POP1, POP3, POP4, POP5, POP6, POP7, POP8, RMP1, RPP1 and SNM1, many of which are shared with the RNase P complex.

Its subcellular location is the membrane. It is found in the cytoplasm. It localises to the nucleus. Functionally, functions as part of ribonuclease MRP (RNase MRP), which is involved in rRNA processing in mitochondria. In Saccharomyces cerevisiae (strain ATCC 204508 / S288c) (Baker's yeast), this protein is Ribonuclease MRP protein subunit RMP1.